An 887-amino-acid polypeptide reads, in one-letter code: Alanine--tRNA ligase (887 aa).

Positions 581, 585, 683, and 687 each coordinate Zn(2+).

The protein belongs to the class-II aminoacyl-tRNA synthetase family. Requires Zn(2+) as cofactor.

The protein localises to the cytoplasm. It catalyses the reaction tRNA(Ala) + L-alanine + ATP = L-alanyl-tRNA(Ala) + AMP + diphosphate. Functionally, catalyzes the attachment of alanine to tRNA(Ala) in a two-step reaction: alanine is first activated by ATP to form Ala-AMP and then transferred to the acceptor end of tRNA(Ala). Also edits incorrectly charged Ser-tRNA(Ala) and Gly-tRNA(Ala) via its editing domain. The polypeptide is Alanine--tRNA ligase (Ehrlichia canis (strain Jake)).